A 317-amino-acid polypeptide reads, in one-letter code: SVP1-like protein 2 (317 aa).

WD repeat units lie at residues 119-159 (AHST…KMAE) and 164-203 (VDHA…NAPY).

Belongs to the WD repeat PROPPIN family.

It localises to the vacuole membrane. The protein localises to the cytoplasmic vesicle membrane. Functionally, involved in mitochondrial or peroxisomal functions and amino acid signaling pathways. In Emericella nidulans (strain FGSC A4 / ATCC 38163 / CBS 112.46 / NRRL 194 / M139) (Aspergillus nidulans), this protein is SVP1-like protein 2 (hsv2).